Consider the following 313-residue polypeptide: Porphobilinogen deaminase (313 aa).

S-(dipyrrolylmethanemethyl)cysteine is present on cysteine 242.

This sequence belongs to the HMBS family. Monomer. The cofactor is dipyrromethane.

It catalyses the reaction 4 porphobilinogen + H2O = hydroxymethylbilane + 4 NH4(+). It functions in the pathway porphyrin-containing compound metabolism; protoporphyrin-IX biosynthesis; coproporphyrinogen-III from 5-aminolevulinate: step 2/4. Its function is as follows. Tetrapolymerization of the monopyrrole PBG into the hydroxymethylbilane pre-uroporphyrinogen in several discrete steps. This is Porphobilinogen deaminase from Pseudomonas syringae pv. tomato (strain ATCC BAA-871 / DC3000).